A 312-amino-acid polypeptide reads, in one-letter code: Methionyl-tRNA formyltransferase (312 aa).

109 to 112 provides a ligand contact to (6S)-5,6,7,8-tetrahydrofolate; sequence SLLP.

This sequence belongs to the Fmt family.

It catalyses the reaction L-methionyl-tRNA(fMet) + (6R)-10-formyltetrahydrofolate = N-formyl-L-methionyl-tRNA(fMet) + (6S)-5,6,7,8-tetrahydrofolate + H(+). In terms of biological role, attaches a formyl group to the free amino group of methionyl-tRNA(fMet). The formyl group appears to play a dual role in the initiator identity of N-formylmethionyl-tRNA by promoting its recognition by IF2 and preventing the misappropriation of this tRNA by the elongation apparatus. This is Methionyl-tRNA formyltransferase from Caulobacter sp. (strain K31).